Consider the following 514-residue polypeptide: NAD(P)H-quinone oxidoreductase subunit 2 (514 aa).

The next 14 membrane-spanning stretches (helical) occupy residues 16–36 (IWPE…DLIV), 43–63 (WLPY…YFEW), 80–100 (LSIV…LMSV), 110–130 (LAEF…LSGA), 133–153 (LVMI…MTGY), 168–188 (LLIG…LYGL), 211–231 (LGLA…ISAV), 245–265 (PTPV…ALAI), 279–299 (WHFI…VVAL), 307–327 (MLAY…TANS), 335–355 (IFYL…IILF), 379–399 (LGLS…GFFG), 411–431 (GLYG…YYYI), and 467–487 (VGLV…NPLF).

The protein belongs to the complex I subunit 2 family. NDH-1 can be composed of about 15 different subunits; different subcomplexes with different compositions have been identified which probably have different functions.

It localises to the cellular thylakoid membrane. The enzyme catalyses a plastoquinone + NADH + (n+1) H(+)(in) = a plastoquinol + NAD(+) + n H(+)(out). The catalysed reaction is a plastoquinone + NADPH + (n+1) H(+)(in) = a plastoquinol + NADP(+) + n H(+)(out). Functionally, NDH-1 shuttles electrons from an unknown electron donor, via FMN and iron-sulfur (Fe-S) centers, to quinones in the respiratory and/or the photosynthetic chain. The immediate electron acceptor for the enzyme in this species is believed to be plastoquinone. Couples the redox reaction to proton translocation, and thus conserves the redox energy in a proton gradient. Cyanobacterial NDH-1 also plays a role in inorganic carbon-concentration. In Gloeothece citriformis (strain PCC 7424) (Cyanothece sp. (strain PCC 7424)), this protein is NAD(P)H-quinone oxidoreductase subunit 2.